Consider the following 538-residue polypeptide: Histone-arginine methyltransferase CARMER (538 aa).

The SAM-dependent MTase PRMT-type domain maps to 148-457 (ASQYFQFYGY…QSYDVTIDLH (310 aa)). Gln-161, Arg-170, Gly-194, Glu-216, Glu-245, and Thr-273 together coordinate S-adenosyl-L-methionine. Arg-508 bears the Asymmetric dimethylarginine; by autocatalysis mark.

It belongs to the class I-like SAM-binding methyltransferase superfamily. Protein arginine N-methyltransferase family. As to quaternary structure, homodimer. The dimethylated protein is the major form.

The protein resides in the cytoplasm. The protein localises to the nucleus. The enzyme catalyses L-arginyl-[protein] + 2 S-adenosyl-L-methionine = N(omega),N(omega)-dimethyl-L-arginyl-[protein] + 2 S-adenosyl-L-homocysteine + 2 H(+). In terms of biological role, methylates (mono- and asymmetric dimethylation) the guanidino nitrogens of arginyl residues in proteins. May methylate histone H3 at 'Arg-17' and activate transcription via chromatin remodeling. This Drosophila virilis (Fruit fly) protein is Histone-arginine methyltransferase CARMER (Art4).